A 103-amino-acid polypeptide reads, in one-letter code: uncharacterized protein (103 aa).

A disordered region spans residues Met-1 to Arg-103. Composition is skewed to basic residues over residues Arg-55–Ser-65 and Arg-74–Arg-84.

It belongs to the epstein-barr virus RPMS1 family.

This is an uncharacterized protein from Epstein-Barr virus (strain GD1) (HHV-4).